A 202-amino-acid polypeptide reads, in one-letter code: MPIGVPKVPFRNPGEEDAVWVDVYNRLHRERLLFLGQEVDSEISNQLIGLMVYLSIEDDTKDLYLFINSPGGWVIPGIAIYDTMQFVPPDIHTICMGLAASMGSFLLVGGEITKRLAFPHARVMIHQPASSFYEAQTGEFILEAEELLKLRETVTRVYVQRTGNPLWVVSEDMERDVFMSAIEAQAHGIVDLVAVENSGDLT.

Ser-101 (nucleophile) is an active-site residue. The active site involves His-126.

It belongs to the peptidase S14 family. Component of the chloroplastic Clp protease core complex.

The protein resides in the plastid. Its subcellular location is the chloroplast stroma. It carries out the reaction Hydrolysis of proteins to small peptides in the presence of ATP and magnesium. alpha-casein is the usual test substrate. In the absence of ATP, only oligopeptides shorter than five residues are hydrolyzed (such as succinyl-Leu-Tyr-|-NHMec, and Leu-Tyr-Leu-|-Tyr-Trp, in which cleavage of the -Tyr-|-Leu- and -Tyr-|-Trp bonds also occurs).. Functionally, cleaves peptides in various proteins in a process that requires ATP hydrolysis. Has a chymotrypsin-like activity. Plays a major role in the degradation of misfolded proteins. This Buxus microphylla (Littleleaf boxwood) protein is ATP-dependent Clp protease proteolytic subunit.